A 146-amino-acid polypeptide reads, in one-letter code: Large ribosomal subunit protein uL16c (146 aa).

Belongs to the universal ribosomal protein uL16 family. In terms of assembly, part of the 50S ribosomal subunit.

It is found in the plastid. Its subcellular location is the chloroplast. This Angiopteris evecta (Mule's foot fern) protein is Large ribosomal subunit protein uL16c.